A 360-amino-acid chain; its full sequence is MTTGSRIVLHVDMDSFFASIEVRRDPSLAGRPVIVGADPKGGAGRGVVSTCSYEARRYGVHSGMPISRAFDLCPHGVYLPVDRPFYASVSVEIMALLSRHAGRIEQVSIDEAYLDVSDAGSFPAAGALAAAIKREVREETGLTCSVGVAPGKAVAKIASDFQKPDGLTIVRPDEVAGFLASLPVGRIPGIGKKTGEDLRQAGILTVGDLARRDVQEVIARLGRSGVRVHHLARGIDDGEVQGREGCKSISRETTFEADTADPPVLAGTLAELADDVAETLRADNLRCRTVTVKVRYRGFQTHTRSRTLPRFTSDPETIRRAASGLLLPFLNGEPVRLIGVRLSMLEGGCTRQASIDEFFS.

Positions 8 to 191 (VLHVDMDSFF…LPVGRIPGIG (184 aa)) constitute a UmuC domain. 2 residues coordinate Mg(2+): Asp12 and Asp110. Glu111 is an active-site residue.

It belongs to the DNA polymerase type-Y family. As to quaternary structure, monomer. Requires Mg(2+) as cofactor.

It is found in the cytoplasm. The enzyme catalyses DNA(n) + a 2'-deoxyribonucleoside 5'-triphosphate = DNA(n+1) + diphosphate. Poorly processive, error-prone DNA polymerase involved in untargeted mutagenesis. Copies undamaged DNA at stalled replication forks, which arise in vivo from mismatched or misaligned primer ends. These misaligned primers can be extended by PolIV. Exhibits no 3'-5' exonuclease (proofreading) activity. May be involved in translesional synthesis. The polypeptide is DNA polymerase IV (Methanoculleus marisnigri (strain ATCC 35101 / DSM 1498 / JR1)).